We begin with the raw amino-acid sequence, 607 residues long: Elongation factor 4 (607 aa).

A tr-type G domain is found at 11-193 (GKIRNFSIIA…QIVEKVPAPT (183 aa)). GTP is bound by residues 23–28 (DHGKST) and 140–143 (NKID).

Belongs to the TRAFAC class translation factor GTPase superfamily. Classic translation factor GTPase family. LepA subfamily.

It localises to the cell membrane. The catalysed reaction is GTP + H2O = GDP + phosphate + H(+). Functionally, required for accurate and efficient protein synthesis under certain stress conditions. May act as a fidelity factor of the translation reaction, by catalyzing a one-codon backward translocation of tRNAs on improperly translocated ribosomes. Back-translocation proceeds from a post-translocation (POST) complex to a pre-translocation (PRE) complex, thus giving elongation factor G a second chance to translocate the tRNAs correctly. Binds to ribosomes in a GTP-dependent manner. This is Elongation factor 4 from Streptococcus pneumoniae (strain Taiwan19F-14).